A 255-amino-acid chain; its full sequence is Staphylococcal secretory antigen ssaA1 (255 aa).

An N-terminal signal peptide occupies residues 1–26 (MKKIVTATIATAGLATIAFAGHDAQA). 3 consecutive repeat copies span residues 75-78 (YNNY), 88-91 (YNNY), and 98-101 (YNNY). Residues 75-101 (YNNYNTYSYNNASYNNYYNHSYQYNNY) form a 3 X 4 AA repeats of Y-N-N-Y region. Positions 134-255 (AAPSSNGRSI…NQAGSYNFIH (122 aa)) constitute a Peptidase C51 domain.

It localises to the secreted. Not known; immunogenic protein. The chain is Staphylococcal secretory antigen ssaA1 (ssaA1) from Staphylococcus aureus (strain MW2).